The sequence spans 574 residues: Sulfate adenylyltransferase (574 aa).

Positions 1–169 are N-terminal; the sequence is MANPPHGGVL…IEAINKLNHY (169 aa). The catalytic stretch occupies residues 170 to 394; it reads DYVALRYTPA…LRESSPPRHT (225 aa). Gln-197 provides a ligand contact to sulfate. ATP-binding positions include 197 to 200 and 291 to 294; these read QTRN and GRDH. Catalysis depends on residues Thr-198, Arg-199, and Asn-200. Arg-199 is a binding site for sulfate. Ala-295 lines the sulfate pocket. Val-333 provides a ligand contact to ATP. An allosteric regulation domain; adenylyl-sulfate kinase-like region spans residues 395 to 574; it reads QGFTIFLTGY…LETEGFFDRS (180 aa). 3'-phosphoadenylyl sulfate contacts are provided by residues 434–437, Arg-451, 477–478, and Arg-516; these read DTVR and IA.

In the N-terminal section; belongs to the sulfate adenylyltransferase family. The protein in the C-terminal section; belongs to the APS kinase family. Homohexamer. Dimer of trimers.

The protein localises to the cytoplasm. The enzyme catalyses sulfate + ATP + H(+) = adenosine 5'-phosphosulfate + diphosphate. It participates in sulfur metabolism; hydrogen sulfide biosynthesis; sulfite from sulfate: step 1/3. Allosterically inhibited by 3'-phosphoadenosine 5'-phosphosulfate (PAPS). In terms of biological role, catalyzes the first intracellular reaction of sulfate assimilation, forming adenosine-5'-phosphosulfate (APS) from inorganic sulfate and ATP. Plays an important role in sulfate activation as a component of the biosynthesis pathway of sulfur-containing amino acids. This is Sulfate adenylyltransferase from Neosartorya fischeri (strain ATCC 1020 / DSM 3700 / CBS 544.65 / FGSC A1164 / JCM 1740 / NRRL 181 / WB 181) (Aspergillus fischerianus).